Reading from the N-terminus, the 617-residue chain is Ceramide transfer protein (617 aa).

Positions 1 to 11 (MSDNQSWNSSG) are enriched in polar residues. The segment at 1–23 (MSDNQSWNSSGSEEDLETESGPP) is disordered. In terms of domain architecture, PH spans 23-117 (PVERCGVLSK…WIDSIEQHKS (95 aa)). The stretch at 268–302 (REDSWQKRLDKEIEKRRRVEEAYKNAMTELKKKSH) forms a coiled coil. An FFAT motif is present at residues 320–326 (EFFDAVE). Positions 332 to 344 (QDKIEQSQSEKGR) are enriched in basic and acidic residues. Residues 332–355 (QDKIEQSQSEKGRSHWPSSLPSTE) are disordered. Residues 383–611 (DEHRFRIQVE…FTSYVQEKTA (229 aa)) form the START domain. The an N-acylsphing-4-enine site is built by Glu-466, Gln-487, Asn-524, and Tyr-572.

Its subcellular location is the cytoplasm. The protein localises to the golgi apparatus. The protein resides in the endoplasmic reticulum. The catalysed reaction is N-hexadecanoylsphing-4-enine(in) = N-hexadecanoylsphing-4-enine(out). Functionally, may mediate the intracellular trafficking of ceramide in a non-vesicular manner. In Xenopus tropicalis (Western clawed frog), this protein is Ceramide transfer protein (cert1).